The sequence spans 1104 residues: Collagenase ColA (1104 aa).

An N-terminal signal peptide occupies residues 1–39 (MKKNLKRGELTKLKLVERWSATFTLAAFILFNSSFKVLA). Residues 40-86 (ADKKVENSNNGQITREINADQISKTELNNEVATDNNRPLGPSIAPSR) constitute a propeptide that is removed on maturation. Residues 87-761 (ARNNKIYTFD…YVYDVVFHGM (675 aa)) form an S1 metalloprotease domain region. Positions 93–367 (YTFDELNRMN…AANDLDLNFG (275 aa)) are activator domain. The segment at 377–646 (DFNKIKADAR…MDSLLNNIDN (270 aa)) is catalytic subdomain. Glutamate 477 serves as a coordination point for Ca(2+). Residue histidine 502 coordinates Zn(2+). Glutamate 503 is an active-site residue. Histidine 506 is a binding site for Zn(2+). Residues glycine 510, valine 514, and glycine 516 each coordinate Ca(2+). Glutamate 534 is a binding site for Zn(2+). A helper subdomain region spans residues 654–767 (DEYVNGHEAK…FHGMNTDTNT (114 aa)). The segment at 762 to 860 (NTDTNTDVHV…KKIKVVEDKP (99 aa)) is S2 domain. The Ca(2+) site is built by asparagine 772, lysine 773, aspartate 800, aspartate 802, aspartate 841, glutamate 866, glutamate 868, asparagine 870, aspartate 894, aspartate 897, glutamate 993, glutamate 995, asparagine 997, leucine 1016, aspartate 1020, lysine 1022, and aspartate 1023. Residues 774–862 (EPKAVIKSDS…IKVVEDKPVE (89 aa)) enclose the PKD domain. An S3a collagen-binding domain region spans residues 865–979 (NESEPNNDFE…TYTVNVKGNL (115 aa)). Positions 992–1104 (KEVENNNDFD…GNYIVNLQNK (113 aa)) are S3b collagen-binding domain.

The protein belongs to the peptidase M9B family. Collagenase subfamily. Requires Ca(2+) as cofactor. Zn(2+) serves as cofactor.

The protein resides in the secreted. The enzyme catalyses Digestion of native collagen in the triple helical region at Xaa-|-Gly bonds. With synthetic peptides, a preference is shown for Gly at P3 and P1', Pro and Ala at P2 and P2', and hydroxyproline, Ala or Arg at P3'.. Functionally, clostridial collagenases are among the most efficient degraders of eukaryotic collagen known; saprophytes use collagen as a carbon source while pathogens additionally digest collagen to aid in host colonization. Has both tripeptidylcarboxypeptidase on Gly-X-Y and endopeptidase activities; the endopeptidase cuts within the triple helix region of collagen while tripeptidylcarboxypeptidase successively digests the exposed ends, thus clostridial collagenases can digest large sections of collagen. This chain is Collagenase ColA (colA), found in Clostridium perfringens (strain 13 / Type A).